Consider the following 210-residue polypeptide: Superoxide dismutase [Mn], mitochondrial (210 aa).

Mn(2+) contacts are provided by histidine 30, histidine 78, aspartate 166, and histidine 170.

It belongs to the iron/manganese superoxide dismutase family. Homotetramer. Mn(2+) is required as a cofactor. Post-translationally, the N-terminus is blocked.

It is found in the mitochondrion matrix. It catalyses the reaction 2 superoxide + 2 H(+) = H2O2 + O2. In terms of biological role, destroys superoxide anion radicals which are normally produced within the cells and which are toxic to biological systems. The sequence is that of Superoxide dismutase [Mn], mitochondrial (SOD) from Penicillium chrysogenum (Penicillium notatum).